The primary structure comprises 959 residues: Glycine dehydrogenase (decarboxylating) (959 aa).

Lysine 707 carries the post-translational modification N6-(pyridoxal phosphate)lysine.

It belongs to the GcvP family. The glycine cleavage system is composed of four proteins: P, T, L and H. The cofactor is pyridoxal 5'-phosphate.

The catalysed reaction is N(6)-[(R)-lipoyl]-L-lysyl-[glycine-cleavage complex H protein] + glycine + H(+) = N(6)-[(R)-S(8)-aminomethyldihydrolipoyl]-L-lysyl-[glycine-cleavage complex H protein] + CO2. Its function is as follows. The glycine cleavage system catalyzes the degradation of glycine. The P protein binds the alpha-amino group of glycine through its pyridoxal phosphate cofactor; CO(2) is released and the remaining methylamine moiety is then transferred to the lipoamide cofactor of the H protein. This Photobacterium profundum (strain SS9) protein is Glycine dehydrogenase (decarboxylating).